The sequence spans 198 residues: Ribonuclease HII (198 aa).

The RNase H type-2 domain occupies 6–195; the sequence is RRVAGVDEVG…VHHMLYQDKN (190 aa). The a divalent metal cation site is built by Asp12, Glu13, and Asp103.

Belongs to the RNase HII family. Requires Mn(2+) as cofactor. Mg(2+) serves as cofactor.

The protein resides in the cytoplasm. The enzyme catalyses Endonucleolytic cleavage to 5'-phosphomonoester.. In terms of biological role, endonuclease that specifically degrades the RNA of RNA-DNA hybrids. This chain is Ribonuclease HII, found in Roseobacter denitrificans (strain ATCC 33942 / OCh 114) (Erythrobacter sp. (strain OCh 114)).